A 565-amino-acid polypeptide reads, in one-letter code: NAD-dependent malic enzyme (565 aa).

Residue tyrosine 104 is the Proton donor of the active site. NAD(+) is bound at residue arginine 157. Catalysis depends on lysine 175, which acts as the Proton acceptor. Residues glutamate 246, aspartate 247, and aspartate 270 each coordinate a divalent metal cation. Positions 270 and 418 each coordinate NAD(+).

The protein belongs to the malic enzymes family. As to quaternary structure, homotetramer. Mg(2+) is required as a cofactor. Mn(2+) serves as cofactor.

The enzyme catalyses (S)-malate + NAD(+) = pyruvate + CO2 + NADH. It carries out the reaction oxaloacetate + H(+) = pyruvate + CO2. The polypeptide is NAD-dependent malic enzyme (Yersinia enterocolitica serotype O:8 / biotype 1B (strain NCTC 13174 / 8081)).